The following is a 316-amino-acid chain: Ribosomal RNA small subunit methyltransferase H (316 aa).

S-adenosyl-L-methionine is bound by residues G35–H37, D55, Y79, D100, and Q107.

The protein belongs to the methyltransferase superfamily. RsmH family.

The protein localises to the cytoplasm. It carries out the reaction cytidine(1402) in 16S rRNA + S-adenosyl-L-methionine = N(4)-methylcytidine(1402) in 16S rRNA + S-adenosyl-L-homocysteine + H(+). Specifically methylates the N4 position of cytidine in position 1402 (C1402) of 16S rRNA. The polypeptide is Ribosomal RNA small subunit methyltransferase H (Nitrosospira multiformis (strain ATCC 25196 / NCIMB 11849 / C 71)).